The following is a 325-amino-acid chain: Eukaryotic translation initiation factor 3 subunit I (325 aa).

WD repeat units follow at residues 8–47 (GHER…RLGT), 50–89 (GHTG…QLAL), 144–183 (CSES…VLKK), 186–225 (EHTK…HVKT), and 283–324 (GHFG…FELE).

It belongs to the eIF-3 subunit I family. Component of the eukaryotic translation initiation factor 3 (eIF-3) complex, which is composed of 13 subunits: eif3a, eif3b, eif3c, eif3d, eif3e, eif3f, eif3g, eif3h, eif3i, eif3j, eif3k, eif3l and eif3m.

The protein localises to the cytoplasm. In terms of biological role, component of the eukaryotic translation initiation factor 3 (eIF-3) complex, which is involved in protein synthesis of a specialized repertoire of mRNAs and, together with other initiation factors, stimulates binding of mRNA and methionyl-tRNAi to the 40S ribosome. The eIF-3 complex specifically targets and initiates translation of a subset of mRNAs involved in cell proliferation. This is Eukaryotic translation initiation factor 3 subunit I (eif3i) from Danio rerio (Zebrafish).